The primary structure comprises 156 residues: Endogenous retrovirus group K member 19 Pro protein (156 aa).

The region spanning 21 to 96 is the Peptidase A2 domain; it reads FEGLVDTGAD…IPLNLWGRDL (76 aa). The active site involves Asp26. The region spanning 111–156 is the G-patch domain; that stretch reads YSPTSQKIMTKMGYILGKGLGKNEDGIKIPVEAKINQKREGIGYPF.

It belongs to the peptidase A2 family. HERV class-II K(HML-2) subfamily. In terms of assembly, active as a homodimer. In terms of processing, autoproteolytically processed at the N-terminus. Expected C-terminal autoprocessing not detected. The sequence shown is that of the processed Pro protein.

The catalysed reaction is Processing at the authentic HIV-1 PR recognition site and release of the mature p17 matrix and the p24 capsid protein, as a result of the cleavage of the -SQNY-|-PIVQ- cleavage site.. In terms of biological role, retroviral proteases have roles in the processing of the primary translation products and the maturation of the viral particle. Endogenous Pro proteins may have kept, lost or modified their original function during evolution. The chain is Endogenous retrovirus group K member 19 Pro protein (ERVK-19) from Homo sapiens (Human).